Here is a 61-residue protein sequence, read N- to C-terminus: Large ribosomal subunit protein bL32 (61 aa).

Belongs to the bacterial ribosomal protein bL32 family.

In Hyphomonas neptunium (strain ATCC 15444), this protein is Large ribosomal subunit protein bL32.